The primary structure comprises 284 residues: Large ribosomal subunit protein uL2 (284 aa).

Disordered regions lie at residues E28–S50 and R232–K284. The segment covering R36 to F46 has biased composition (basic residues). The segment covering D240–H250 has biased composition (basic and acidic residues). A compositionally biased stretch (basic residues) spans K264–K284.

It belongs to the universal ribosomal protein uL2 family. In terms of assembly, part of the 50S ribosomal subunit. Forms a bridge to the 30S subunit in the 70S ribosome.

Its function is as follows. One of the primary rRNA binding proteins. Required for association of the 30S and 50S subunits to form the 70S ribosome, for tRNA binding and peptide bond formation. It has been suggested to have peptidyltransferase activity; this is somewhat controversial. Makes several contacts with the 16S rRNA in the 70S ribosome. The polypeptide is Large ribosomal subunit protein uL2 (Chlamydia trachomatis serovar L2 (strain ATCC VR-902B / DSM 19102 / 434/Bu)).